The following is a 322-amino-acid chain: Phosphatidylserine decarboxylase proenzyme (322 aa).

Active-site charge relay system; for autoendoproteolytic cleavage activity residues include Asp90, His147, and Ser254. Ser254 functions as the Schiff-base intermediate with substrate; via pyruvic acid; for decarboxylase activity in the catalytic mechanism. Ser254 is modified (pyruvic acid (Ser); by autocatalysis). The disordered stretch occupies residues 295–322 (VEPAPLPTEEIKAEHDASPLVDNKKDDT). The segment covering 303–322 (EEIKAEHDASPLVDNKKDDT) has biased composition (basic and acidic residues).

It belongs to the phosphatidylserine decarboxylase family. PSD-B subfamily. Prokaryotic type I sub-subfamily. As to quaternary structure, heterodimer of a large membrane-associated beta subunit and a small pyruvoyl-containing alpha subunit. Pyruvate is required as a cofactor. In terms of processing, is synthesized initially as an inactive proenzyme. Formation of the active enzyme involves a self-maturation process in which the active site pyruvoyl group is generated from an internal serine residue via an autocatalytic post-translational modification. Two non-identical subunits are generated from the proenzyme in this reaction, and the pyruvate is formed at the N-terminus of the alpha chain, which is derived from the carboxyl end of the proenzyme. The autoendoproteolytic cleavage occurs by a canonical serine protease mechanism, in which the side chain hydroxyl group of the serine supplies its oxygen atom to form the C-terminus of the beta chain, while the remainder of the serine residue undergoes an oxidative deamination to produce ammonia and the pyruvoyl prosthetic group on the alpha chain. During this reaction, the Ser that is part of the protease active site of the proenzyme becomes the pyruvoyl prosthetic group, which constitutes an essential element of the active site of the mature decarboxylase.

It localises to the cell membrane. The catalysed reaction is a 1,2-diacyl-sn-glycero-3-phospho-L-serine + H(+) = a 1,2-diacyl-sn-glycero-3-phosphoethanolamine + CO2. It participates in phospholipid metabolism; phosphatidylethanolamine biosynthesis; phosphatidylethanolamine from CDP-diacylglycerol: step 2/2. In terms of biological role, catalyzes the formation of phosphatidylethanolamine (PtdEtn) from phosphatidylserine (PtdSer). This is Phosphatidylserine decarboxylase proenzyme from Salmonella agona (strain SL483).